The sequence spans 948 residues: UvrABC system protein A (948 aa).

Glycine 31 to serine 38 contributes to the ATP binding site. The C4-type zinc-finger motif lies at cysteine 249–cysteine 277. 2 ABC transporter domains span residues tryptophan 307–leucine 586 and glycine 606–lysine 934. Glycine 638–serine 645 serves as a coordination point for ATP. Residues cysteine 737–cysteine 763 form a C4-type zinc finger.

It belongs to the ABC transporter superfamily. UvrA family. Forms a heterotetramer with UvrB during the search for lesions.

It localises to the cytoplasm. The UvrABC repair system catalyzes the recognition and processing of DNA lesions. UvrA is an ATPase and a DNA-binding protein. A damage recognition complex composed of 2 UvrA and 2 UvrB subunits scans DNA for abnormalities. When the presence of a lesion has been verified by UvrB, the UvrA molecules dissociate. This chain is UvrABC system protein A, found in Leptospira interrogans serogroup Icterohaemorrhagiae serovar copenhageni (strain Fiocruz L1-130).